Reading from the N-terminus, the 313-residue chain is 4-hydroxy-3-methylbut-2-enyl diphosphate reductase (313 aa).

Cys12 contributes to the [4Fe-4S] cluster binding site. His41 and His74 together coordinate (2E)-4-hydroxy-3-methylbut-2-enyl diphosphate. 2 residues coordinate dimethylallyl diphosphate: His41 and His74. Isopentenyl diphosphate-binding residues include His41 and His74. Cys96 is a binding site for [4Fe-4S] cluster. (2E)-4-hydroxy-3-methylbut-2-enyl diphosphate is bound at residue His124. His124 lines the dimethylallyl diphosphate pocket. His124 is an isopentenyl diphosphate binding site. The active-site Proton donor is Glu126. Thr167 is a binding site for (2E)-4-hydroxy-3-methylbut-2-enyl diphosphate. Cys197 lines the [4Fe-4S] cluster pocket. (2E)-4-hydroxy-3-methylbut-2-enyl diphosphate is bound by residues Ser225, Ser226, Asn227, and Ser269. Dimethylallyl diphosphate is bound by residues Ser225, Ser226, Asn227, and Ser269. The isopentenyl diphosphate site is built by Ser225, Ser226, Asn227, and Ser269.

It belongs to the IspH family. As to quaternary structure, homodimer. [4Fe-4S] cluster is required as a cofactor.

The catalysed reaction is isopentenyl diphosphate + 2 oxidized [2Fe-2S]-[ferredoxin] + H2O = (2E)-4-hydroxy-3-methylbut-2-enyl diphosphate + 2 reduced [2Fe-2S]-[ferredoxin] + 2 H(+). It carries out the reaction dimethylallyl diphosphate + 2 oxidized [2Fe-2S]-[ferredoxin] + H2O = (2E)-4-hydroxy-3-methylbut-2-enyl diphosphate + 2 reduced [2Fe-2S]-[ferredoxin] + 2 H(+). Its pathway is isoprenoid biosynthesis; dimethylallyl diphosphate biosynthesis; dimethylallyl diphosphate from (2E)-4-hydroxy-3-methylbutenyl diphosphate: step 1/1. The protein operates within isoprenoid biosynthesis; isopentenyl diphosphate biosynthesis via DXP pathway; isopentenyl diphosphate from 1-deoxy-D-xylulose 5-phosphate: step 6/6. In terms of biological role, catalyzes the conversion of 1-hydroxy-2-methyl-2-(E)-butenyl 4-diphosphate (HMBPP) into a mixture of isopentenyl diphosphate (IPP) and dimethylallyl diphosphate (DMAPP). Acts in the terminal step of the DOXP/MEP pathway for isoprenoid precursor biosynthesis. In Buchnera aphidicola subsp. Schizaphis graminum (strain Sg), this protein is 4-hydroxy-3-methylbut-2-enyl diphosphate reductase.